We begin with the raw amino-acid sequence, 468 residues long: ATP synthase subunit beta (468 aa).

150–157 (GGAGVGKT) is a binding site for ATP.

This sequence belongs to the ATPase alpha/beta chains family. In terms of assembly, F-type ATPases have 2 components, CF(1) - the catalytic core - and CF(0) - the membrane proton channel. CF(1) has five subunits: alpha(3), beta(3), gamma(1), delta(1), epsilon(1). CF(0) has three main subunits: a(1), b(2) and c(9-12). The alpha and beta chains form an alternating ring which encloses part of the gamma chain. CF(1) is attached to CF(0) by a central stalk formed by the gamma and epsilon chains, while a peripheral stalk is formed by the delta and b chains.

It localises to the cell inner membrane. It catalyses the reaction ATP + H2O + 4 H(+)(in) = ADP + phosphate + 5 H(+)(out). Its function is as follows. Produces ATP from ADP in the presence of a proton gradient across the membrane. The catalytic sites are hosted primarily by the beta subunits. The chain is ATP synthase subunit beta from Acidovorax ebreus (strain TPSY) (Diaphorobacter sp. (strain TPSY)).